The chain runs to 426 residues: Limonoid 21-O-acetyltransferse (426 aa).

Active-site proton acceptor residues include His152 and Asp365.

This sequence belongs to the plant acyltransferase family. In terms of assembly, monomer. Expressed in maturing fruits and in juice vesicles.

The catalysed reaction is isomeliandiol + acetyl-CoA = 21-O-acetyl-isomeliandiol + CoA. Its pathway is secondary metabolite biosynthesis; terpenoid biosynthesis. Acetyltransferase involved in the biosynthesis of limonoids triterpene natural products such as limonin, a compound with insecticidal activity responsible for the bitter taste in citrus. Catalyzes the formation of 21-O-acetyl-isomeliandiol from isomeliandiol. The polypeptide is Limonoid 21-O-acetyltransferse (Citrus sinensis (Sweet orange)).